The following is a 469-amino-acid chain: ATP-dependent protease ATPase subunit HslU (469 aa).

ATP-binding positions include I24, 66–71, D282, E347, and R419; that span reads GVGKTE.

The protein belongs to the ClpX chaperone family. HslU subfamily. In terms of assembly, a double ring-shaped homohexamer of HslV is capped on each side by a ring-shaped HslU homohexamer. The assembly of the HslU/HslV complex is dependent on binding of ATP.

It localises to the cytoplasm. Its function is as follows. ATPase subunit of a proteasome-like degradation complex; this subunit has chaperone activity. The binding of ATP and its subsequent hydrolysis by HslU are essential for unfolding of protein substrates subsequently hydrolyzed by HslV. HslU recognizes the N-terminal part of its protein substrates and unfolds these before they are guided to HslV for hydrolysis. The polypeptide is ATP-dependent protease ATPase subunit HslU (Listeria monocytogenes serovar 1/2a (strain ATCC BAA-679 / EGD-e)).